A 405-amino-acid polypeptide reads, in one-letter code: L-rhamnonate dehydratase (405 aa).

Substrate is bound by residues H33 and R59. Residues D226, E252, and E280 each coordinate Mg(2+). H329 (proton acceptor) is an active-site residue. Position 349 (E349) interacts with substrate.

The protein belongs to the mandelate racemase/muconate lactonizing enzyme family. RhamD subfamily. In terms of assembly, homooctamer; tetramer of dimers. Mg(2+) serves as cofactor.

It catalyses the reaction L-rhamnonate = 2-dehydro-3-deoxy-L-rhamnonate + H2O. Catalyzes the dehydration of L-rhamnonate to 2-keto-3-deoxy-L-rhamnonate (KDR). The protein is L-rhamnonate dehydratase of Escherichia coli O81 (strain ED1a).